A 227-amino-acid polypeptide reads, in one-letter code: Phosphoribosylformylglycinamidine synthase subunit PurQ (227 aa).

The Glutamine amidotransferase type-1 domain maps to 2 to 227 (RWAIVRFPGA…FLGLVKEVAR (226 aa)). Residue cysteine 85 is the Nucleophile of the active site. Active-site residues include histidine 200 and glutamate 202.

As to quaternary structure, part of the FGAM synthase complex composed of 1 PurL, 1 PurQ and 2 PurS subunits.

The protein resides in the cytoplasm. The enzyme catalyses N(2)-formyl-N(1)-(5-phospho-beta-D-ribosyl)glycinamide + L-glutamine + ATP + H2O = 2-formamido-N(1)-(5-O-phospho-beta-D-ribosyl)acetamidine + L-glutamate + ADP + phosphate + H(+). The catalysed reaction is L-glutamine + H2O = L-glutamate + NH4(+). Its pathway is purine metabolism; IMP biosynthesis via de novo pathway; 5-amino-1-(5-phospho-D-ribosyl)imidazole from N(2)-formyl-N(1)-(5-phospho-D-ribosyl)glycinamide: step 1/2. Part of the phosphoribosylformylglycinamidine synthase complex involved in the purines biosynthetic pathway. Catalyzes the ATP-dependent conversion of formylglycinamide ribonucleotide (FGAR) and glutamine to yield formylglycinamidine ribonucleotide (FGAM) and glutamate. The FGAM synthase complex is composed of three subunits. PurQ produces an ammonia molecule by converting glutamine to glutamate. PurL transfers the ammonia molecule to FGAR to form FGAM in an ATP-dependent manner. PurS interacts with PurQ and PurL and is thought to assist in the transfer of the ammonia molecule from PurQ to PurL. This Thermus thermophilus (strain ATCC 27634 / DSM 579 / HB8) protein is Phosphoribosylformylglycinamidine synthase subunit PurQ.